The following is a 190-amino-acid chain: Threonylcarbamoyl-AMP synthase (190 aa).

Positions 7 to 190 constitute a YrdC-like domain; sequence GDAIAAAIDV…ALTGELFRQG (184 aa).

This sequence belongs to the SUA5 family. TsaC subfamily.

The protein localises to the cytoplasm. It carries out the reaction L-threonine + hydrogencarbonate + ATP = L-threonylcarbamoyladenylate + diphosphate + H2O. Functionally, required for the formation of a threonylcarbamoyl group on adenosine at position 37 (t(6)A37) in tRNAs that read codons beginning with adenine. Catalyzes the conversion of L-threonine, HCO(3)(-)/CO(2) and ATP to give threonylcarbamoyl-AMP (TC-AMP) as the acyladenylate intermediate, with the release of diphosphate. This Escherichia coli O1:K1 / APEC protein is Threonylcarbamoyl-AMP synthase.